We begin with the raw amino-acid sequence, 178 residues long: Large ribosomal subunit protein uL6 (178 aa).

It belongs to the universal ribosomal protein uL6 family. In terms of assembly, part of the 50S ribosomal subunit.

Functionally, this protein binds to the 23S rRNA, and is important in its secondary structure. It is located near the subunit interface in the base of the L7/L12 stalk, and near the tRNA binding site of the peptidyltransferase center. The chain is Large ribosomal subunit protein uL6 from Streptococcus mutans serotype c (strain ATCC 700610 / UA159).